We begin with the raw amino-acid sequence, 93 residues long: Small ribosomal subunit protein bS20c (93 aa).

The protein belongs to the bacterial ribosomal protein bS20 family.

The protein resides in the plastid. The protein localises to the chloroplast. Its function is as follows. Binds directly to 16S ribosomal RNA. This is Small ribosomal subunit protein bS20c from Trieres chinensis (Marine centric diatom).